The primary structure comprises 201 residues: MEKINKILEKVPIGVAQELKQELAEWIPPIANKEDLPEQTLSQYEFSHGTQPAIPWKGKCFTIPKNLKGESSYLMGTGRAMPTQNMSANLFSISCVLNNITEILTYISQKRIGSLSASLNKELKDLENRTISNLEINRTDIKSDLEKQISLNKENLKGLEIATERLERLFLESRKEQISKDEIANLTQKVKEMQTFLNDKL.

This is an uncharacterized protein from Cestrum yellow leaf curling virus (CmYLCV).